The primary structure comprises 200 residues: NADH-quinone oxidoreductase subunit C (200 aa).

It belongs to the complex I 30 kDa subunit family. In terms of assembly, NDH-1 is composed of 14 different subunits. Subunits NuoB, C, D, E, F, and G constitute the peripheral sector of the complex.

The protein resides in the cell inner membrane. The enzyme catalyses a quinone + NADH + 5 H(+)(in) = a quinol + NAD(+) + 4 H(+)(out). NDH-1 shuttles electrons from NADH, via FMN and iron-sulfur (Fe-S) centers, to quinones in the respiratory chain. The immediate electron acceptor for the enzyme in this species is believed to be ubiquinone. Couples the redox reaction to proton translocation (for every two electrons transferred, four hydrogen ions are translocated across the cytoplasmic membrane), and thus conserves the redox energy in a proton gradient. In Burkholderia mallei (strain NCTC 10247), this protein is NADH-quinone oxidoreductase subunit C.